The chain runs to 513 residues: Histidine ammonia-lyase (513 aa).

The 5-imidazolinone (Ala-Gly) cross-link spans A144 to G146. S145 bears the 2,3-didehydroalanine (Ser) mark.

Belongs to the PAL/histidase family. In terms of processing, contains an active site 4-methylidene-imidazol-5-one (MIO), which is formed autocatalytically by cyclization and dehydration of residues Ala-Ser-Gly.

It is found in the cytoplasm. It catalyses the reaction L-histidine = trans-urocanate + NH4(+). It participates in amino-acid degradation; L-histidine degradation into L-glutamate; N-formimidoyl-L-glutamate from L-histidine: step 1/3. This Streptococcus sanguinis (strain SK36) protein is Histidine ammonia-lyase.